A 265-amino-acid chain; its full sequence is Undecaprenyl-diphosphatase (265 aa).

A run of 7 helical transmembrane segments spans residues 42 to 62 (AATFDVVIQLGAIMAVVVLYW), 82 to 102 (GIVLLMLTSLPACILGLLLHA), 108 to 128 (LFRPATVLIALVVGAICMILV), 157 to 177 (LALWPGFSRSAATIMGGMLLG), 181 to 201 (PLAAEYSFIAAVPIMVAATGY), 217 to 237 (FFLVGMIGSFVSALLAVKVFV), and 244 to 264 (TLIPFACYRLLIAPFVYYFMV).

This sequence belongs to the UppP family.

The protein localises to the cell inner membrane. The catalysed reaction is di-trans,octa-cis-undecaprenyl diphosphate + H2O = di-trans,octa-cis-undecaprenyl phosphate + phosphate + H(+). Catalyzes the dephosphorylation of undecaprenyl diphosphate (UPP). Confers resistance to bacitracin. The polypeptide is Undecaprenyl-diphosphatase (Desulfovibrio desulfuricans (strain ATCC 27774 / DSM 6949 / MB)).